The following is a 488-amino-acid chain: 3-octaprenyl-4-hydroxybenzoate carboxy-lyase (488 aa).

Asn-172 provides a ligand contact to Mn(2+). Prenylated FMN-binding positions include 175 to 177 (IYR), 189 to 191 (RWL), and 194 to 195 (RG). Glu-238 serves as a coordination point for Mn(2+). The active-site Proton donor is Asp-287.

It belongs to the UbiD family. As to quaternary structure, homohexamer. Prenylated FMN serves as cofactor. It depends on Mn(2+) as a cofactor.

It localises to the cell membrane. The enzyme catalyses a 4-hydroxy-3-(all-trans-polyprenyl)benzoate + H(+) = a 2-(all-trans-polyprenyl)phenol + CO2. It participates in cofactor biosynthesis; ubiquinone biosynthesis. In terms of biological role, catalyzes the decarboxylation of 3-octaprenyl-4-hydroxy benzoate to 2-octaprenylphenol, an intermediate step in ubiquinone biosynthesis. The sequence is that of 3-octaprenyl-4-hydroxybenzoate carboxy-lyase from Azotobacter vinelandii (strain DJ / ATCC BAA-1303).